A 416-amino-acid polypeptide reads, in one-letter code: Gamma-glutamyl phosphate reductase (416 aa).

It belongs to the gamma-glutamyl phosphate reductase family.

It is found in the cytoplasm. It carries out the reaction L-glutamate 5-semialdehyde + phosphate + NADP(+) = L-glutamyl 5-phosphate + NADPH + H(+). It functions in the pathway amino-acid biosynthesis; L-proline biosynthesis; L-glutamate 5-semialdehyde from L-glutamate: step 2/2. Catalyzes the NADPH-dependent reduction of L-glutamate 5-phosphate into L-glutamate 5-semialdehyde and phosphate. The product spontaneously undergoes cyclization to form 1-pyrroline-5-carboxylate. The protein is Gamma-glutamyl phosphate reductase of Vibrio atlanticus (strain LGP32) (Vibrio splendidus (strain Mel32)).